The primary structure comprises 198 residues: NADH-quinone oxidoreductase subunit I (198 aa).

4Fe-4S ferredoxin-type domains are found at residues 42–72 (LNRWPDGLEKCVGCELCAWACPADAIYVEGA) and 88–117 (RVYEINYLRCILCGMCIEACPTRALTMTND). The [4Fe-4S] cluster site is built by Cys-52, Cys-55, Cys-58, Cys-62, Cys-97, Cys-100, Cys-103, and Cys-107. The interval 137 to 198 (APLKEGMEQP…DTQHKDEEAA (62 aa)) is disordered. Basic and acidic residues predominate over residues 182–198 (AHRDDDNDTQHKDEEAA).

It belongs to the complex I 23 kDa subunit family. NDH-1 is composed of 14 different subunits. Subunits NuoA, H, J, K, L, M, N constitute the membrane sector of the complex. Requires [4Fe-4S] cluster as cofactor.

The protein resides in the cell membrane. It carries out the reaction a quinone + NADH + 5 H(+)(in) = a quinol + NAD(+) + 4 H(+)(out). NDH-1 shuttles electrons from NADH, via FMN and iron-sulfur (Fe-S) centers, to quinones in the respiratory chain. The immediate electron acceptor for the enzyme in this species is believed to be ubiquinone. Couples the redox reaction to proton translocation (for every two electrons transferred, four hydrogen ions are translocated across the cytoplasmic membrane), and thus conserves the redox energy in a proton gradient. This is NADH-quinone oxidoreductase subunit I from Cutibacterium acnes (strain DSM 16379 / KPA171202) (Propionibacterium acnes).